Consider the following 210-residue polypeptide: 3-oxo-tetronate 4-phosphate decarboxylase (210 aa).

The active-site Proton acceptor is the E74. 3 residues coordinate Zn(2+): E74, H93, and H95. The active-site Proton donor is the Y120. A Zn(2+)-binding site is contributed by H160.

Belongs to the aldolase class II family. AraD/FucA subfamily. It depends on Zn(2+) as a cofactor.

The enzyme catalyses 3-dehydro-4-O-phospho-D-erythronate + H(+) = dihydroxyacetone phosphate + CO2. It catalyses the reaction 3-dehydro-4-O-phospho-L-erythronate + H(+) = dihydroxyacetone phosphate + CO2. In terms of biological role, catalyzes the decarboxylation of 3-oxo-tetronate 4-phosphate to dihydroxyacetone phosphate (DHAP) and CO(2). This Haemophilus influenzae (strain ATCC 51907 / DSM 11121 / KW20 / Rd) protein is 3-oxo-tetronate 4-phosphate decarboxylase.